The chain runs to 666 residues: ESX-1 secretion-associated protein EspI (666 aa).

The span at 1-15 (MAADYDKLFRPHEGM) shows a compositional bias: basic and acidic residues. Positions 1–378 (MAADYDKLFR…ATKPPKVVSQ (378 aa)) are disordered. The segment covering 22-31 (AAQPFFDPSA) has biased composition (low complexity). 3 stretches are compositionally biased toward pro residues: residues 64–80 (APPPPPPPPPPPPPTPM), 87–144 (PPSP…PAPT), and 188–205 (PAPPWAKMPIGEPPPAPS). The segment covering 222–231 (HSRRARRGHR) has biased composition (basic residues). Positions 284-297 (PTRPAPTEPPPSPS) are enriched in pro residues. Residues 357–371 (PKVKKVKPQKPKATK) are compositionally biased toward basic residues. Residue 424–431 (LKGGAGKT) coordinates ATP.

Its function is as follows. Required to repress ESX-1-mediated secretion under low ATP conditions. This function requires the ATP-binding motif. In Mycobacterium tuberculosis (strain CDC 1551 / Oshkosh), this protein is ESX-1 secretion-associated protein EspI.